Reading from the N-terminus, the 349-residue chain is Isopentenyl-diphosphate delta-isomerase (349 aa).

6–7 (RK) contributes to the substrate binding site. FMN is bound by residues 62–64 (AMT), Ser-93, and Asn-122. Gln-152 serves as a coordination point for substrate. Residue Glu-153 coordinates Mg(2+). Residues Lys-184, Thr-214, 258 to 259 (GG), and 280 to 281 (AG) contribute to the FMN site.

It belongs to the IPP isomerase type 2 family. As to quaternary structure, homooctamer. Dimer of tetramers. It depends on FMN as a cofactor. NADPH is required as a cofactor. The cofactor is Mg(2+).

The protein localises to the cytoplasm. The catalysed reaction is isopentenyl diphosphate = dimethylallyl diphosphate. In terms of biological role, involved in the biosynthesis of isoprenoids. Catalyzes the 1,3-allylic rearrangement of the homoallylic substrate isopentenyl (IPP) to its allylic isomer, dimethylallyl diphosphate (DMAPP). In Bacillus subtilis (strain 168), this protein is Isopentenyl-diphosphate delta-isomerase.